The chain runs to 91 residues: Probable Fe(2+)-trafficking protein (91 aa).

The protein belongs to the Fe(2+)-trafficking protein family. In terms of assembly, monomer.

Functionally, could be a mediator in iron transactions between iron acquisition and iron-requiring processes, such as synthesis and/or repair of Fe-S clusters in biosynthetic enzymes. This Klebsiella pneumoniae (strain 342) protein is Probable Fe(2+)-trafficking protein.